A 294-amino-acid polypeptide reads, in one-letter code: Bifunctional protein FolD (294 aa).

Residues 166–168 (GRS), Ser191, and Ile232 each bind NADP(+).

The protein belongs to the tetrahydrofolate dehydrogenase/cyclohydrolase family. In terms of assembly, homodimer.

The catalysed reaction is (6R)-5,10-methylene-5,6,7,8-tetrahydrofolate + NADP(+) = (6R)-5,10-methenyltetrahydrofolate + NADPH. It catalyses the reaction (6R)-5,10-methenyltetrahydrofolate + H2O = (6R)-10-formyltetrahydrofolate + H(+). Its pathway is one-carbon metabolism; tetrahydrofolate interconversion. Functionally, catalyzes the oxidation of 5,10-methylenetetrahydrofolate to 5,10-methenyltetrahydrofolate and then the hydrolysis of 5,10-methenyltetrahydrofolate to 10-formyltetrahydrofolate. This is Bifunctional protein FolD from Afipia carboxidovorans (strain ATCC 49405 / DSM 1227 / KCTC 32145 / OM5) (Oligotropha carboxidovorans).